A 341-amino-acid chain; its full sequence is MRVADFDYPLPEERIAKYPPLQRGSTRLLVICREGGTVSHARYRELDTFLRKGDLLVLNNTRVVKARLMAEKSTGAAIELMLLEKHGQEQSLVLFRGRVKQGDRLRSHGHEFLVEEIVDHGVARLSLPEGRSIQPVFEAHAEVPIPPYLRRPAEPVDRERYQTVFAEHAGSVAAPTASLNMTPELLLRLRDGGVETSSITLHVGLGTFLPIRVDSMEEHVMHREFYSIPAATIEKIRATKASGGRIIALGTTVTRALEHAALSLSGHSGPGPLEGEADIFIYPGCSFRLIDALLTNFHAPRSTVLMLTAAFAGPDLLRRAYREALDKEYRFLSYGDSTLIL.

The protein belongs to the QueA family. In terms of assembly, monomer.

Its subcellular location is the cytoplasm. It catalyses the reaction 7-aminomethyl-7-carbaguanosine(34) in tRNA + S-adenosyl-L-methionine = epoxyqueuosine(34) in tRNA + adenine + L-methionine + 2 H(+). Its pathway is tRNA modification; tRNA-queuosine biosynthesis. Its function is as follows. Transfers and isomerizes the ribose moiety from AdoMet to the 7-aminomethyl group of 7-deazaguanine (preQ1-tRNA) to give epoxyqueuosine (oQ-tRNA). This is S-adenosylmethionine:tRNA ribosyltransferase-isomerase from Chlorobium luteolum (strain DSM 273 / BCRC 81028 / 2530) (Pelodictyon luteolum).